The chain runs to 316 residues: GTP cyclohydrolase FolE2 1 (316 aa).

The protein belongs to the GTP cyclohydrolase IV family.

It catalyses the reaction GTP + H2O = 7,8-dihydroneopterin 3'-triphosphate + formate + H(+). It functions in the pathway cofactor biosynthesis; 7,8-dihydroneopterin triphosphate biosynthesis; 7,8-dihydroneopterin triphosphate from GTP: step 1/1. In terms of biological role, converts GTP to 7,8-dihydroneopterin triphosphate. The sequence is that of GTP cyclohydrolase FolE2 1 from Burkholderia lata (strain ATCC 17760 / DSM 23089 / LMG 22485 / NCIMB 9086 / R18194 / 383).